Consider the following 362-residue polypeptide: F-box protein At1g54550 (362 aa).

In terms of domain architecture, F-box spans Met-1–Ala-47.

The protein is F-box protein At1g54550 of Arabidopsis thaliana (Mouse-ear cress).